A 593-amino-acid polypeptide reads, in one-letter code: Actin-histidine N-methyltransferase (593 aa).

Residues 1–21 (MGKKSRVKTQKSGTGATAAVS) form a disordered region. Residues arginine 75, 104–106 (EGF), arginine 254, 275–279 (DMCNH), and 325–327 (SGF) each bind S-adenosyl-L-methionine. The 221-residue stretch at 94 to 314 (EGFEIANFEE…AGEQIYIFYG (221 aa)) folds into the SET domain. A disordered region spans residues 549–593 (GFVNGENSLFNGTKSESENLIKEESNRETEDAKESSSESTDEVKE). Residues 553–562 (GENSLFNGTK) show a composition bias toward polar residues. Residues 563 to 593 (SESENLIKEESNRETEDAKESSSESTDEVKE) show a composition bias toward basic and acidic residues.

The protein belongs to the class V-like SAM-binding methyltransferase superfamily. SETD3 actin-histidine methyltransferase family.

It is found in the cytoplasm. It carries out the reaction L-histidyl-[protein] + S-adenosyl-L-methionine = N(tele)-methyl-L-histidyl-[protein] + S-adenosyl-L-homocysteine + H(+). Its function is as follows. Protein-histidine N-methyltransferase that specifically mediates 3-methylhistidine (tele-methylhistidine) methylation of actin at 'His-73'. Does not have protein-lysine N-methyltransferase activity and probably only catalyzes histidine methylation of actin. This Gallus gallus (Chicken) protein is Actin-histidine N-methyltransferase.